The sequence spans 285 residues: Aldo-keto reductase (285 aa).

Residue 165-175 (APLAGGILTGK) participates in NADP(+) binding.

It belongs to the aldo/keto reductase family. Aldo/keto reductase 2 subfamily.

This is Aldo-keto reductase from Babesia bovis.